The chain runs to 140 residues: MALPKANRLKSRKDFQAVFREGIRRNGSYLTLRALKPLYSRKPSLDTATQTTQPIESVHISSIRIGISISTKVSKRAVVRNRIKRQITSALYSLLPRLAPGWRLVFIVKPTAAESKCVSPQFLQELEQLLAQAEVFDGNS.

The protein belongs to the RnpA family. As to quaternary structure, consists of a catalytic RNA component (M1 or rnpB) and a protein subunit.

It catalyses the reaction Endonucleolytic cleavage of RNA, removing 5'-extranucleotides from tRNA precursor.. RNaseP catalyzes the removal of the 5'-leader sequence from pre-tRNA to produce the mature 5'-terminus. It can also cleave other RNA substrates such as 4.5S RNA. The protein component plays an auxiliary but essential role in vivo by binding to the 5'-leader sequence and broadening the substrate specificity of the ribozyme. The chain is Ribonuclease P protein component from Nostoc punctiforme (strain ATCC 29133 / PCC 73102).